The following is a 179-amino-acid chain: Large ribosomal subunit protein uL5 (179 aa).

Belongs to the universal ribosomal protein uL5 family. Part of the 50S ribosomal subunit; part of the 5S rRNA/L5/L18/L25 subcomplex. Contacts the 5S rRNA and the P site tRNA. Forms a bridge to the 30S subunit in the 70S ribosome.

In terms of biological role, this is one of the proteins that bind and probably mediate the attachment of the 5S RNA into the large ribosomal subunit, where it forms part of the central protuberance. In the 70S ribosome it contacts protein S13 of the 30S subunit (bridge B1b), connecting the 2 subunits; this bridge is implicated in subunit movement. Contacts the P site tRNA; the 5S rRNA and some of its associated proteins might help stabilize positioning of ribosome-bound tRNAs. This chain is Large ribosomal subunit protein uL5, found in Idiomarina loihiensis (strain ATCC BAA-735 / DSM 15497 / L2-TR).